A 611-amino-acid chain; its full sequence is Dihydroxy-acid dehydratase (611 aa).

D81 serves as a coordination point for Mg(2+). [2Fe-2S] cluster is bound at residue C122. Positions 123 and 124 each coordinate Mg(2+). Position 124 is an N6-carboxylysine (K124). C195 contributes to the [2Fe-2S] cluster binding site. A Mg(2+)-binding site is contributed by E491. The active-site Proton acceptor is the S517.

The protein belongs to the IlvD/Edd family. Homodimer. The cofactor is [2Fe-2S] cluster. Requires Mg(2+) as cofactor.

The catalysed reaction is (2R)-2,3-dihydroxy-3-methylbutanoate = 3-methyl-2-oxobutanoate + H2O. It carries out the reaction (2R,3R)-2,3-dihydroxy-3-methylpentanoate = (S)-3-methyl-2-oxopentanoate + H2O. It participates in amino-acid biosynthesis; L-isoleucine biosynthesis; L-isoleucine from 2-oxobutanoate: step 3/4. It functions in the pathway amino-acid biosynthesis; L-valine biosynthesis; L-valine from pyruvate: step 3/4. Functionally, functions in the biosynthesis of branched-chain amino acids. Catalyzes the dehydration of (2R,3R)-2,3-dihydroxy-3-methylpentanoate (2,3-dihydroxy-3-methylvalerate) into 2-oxo-3-methylpentanoate (2-oxo-3-methylvalerate) and of (2R)-2,3-dihydroxy-3-methylbutanoate (2,3-dihydroxyisovalerate) into 2-oxo-3-methylbutanoate (2-oxoisovalerate), the penultimate precursor to L-isoleucine and L-valine, respectively. The protein is Dihydroxy-acid dehydratase of Brucella canis (strain ATCC 23365 / NCTC 10854 / RM-666).